Reading from the N-terminus, the 236-residue chain is Leucyl/phenylalanyl-tRNA--protein transferase (236 aa).

This sequence belongs to the L/F-transferase family.

It is found in the cytoplasm. The enzyme catalyses N-terminal L-lysyl-[protein] + L-leucyl-tRNA(Leu) = N-terminal L-leucyl-L-lysyl-[protein] + tRNA(Leu) + H(+). The catalysed reaction is N-terminal L-arginyl-[protein] + L-leucyl-tRNA(Leu) = N-terminal L-leucyl-L-arginyl-[protein] + tRNA(Leu) + H(+). It carries out the reaction L-phenylalanyl-tRNA(Phe) + an N-terminal L-alpha-aminoacyl-[protein] = an N-terminal L-phenylalanyl-L-alpha-aminoacyl-[protein] + tRNA(Phe). Functionally, functions in the N-end rule pathway of protein degradation where it conjugates Leu, Phe and, less efficiently, Met from aminoacyl-tRNAs to the N-termini of proteins containing an N-terminal arginine or lysine. The sequence is that of Leucyl/phenylalanyl-tRNA--protein transferase from Shewanella oneidensis (strain ATCC 700550 / JCM 31522 / CIP 106686 / LMG 19005 / NCIMB 14063 / MR-1).